Consider the following 94-residue polypeptide: Small ribosomal subunit protein bS6 (94 aa).

The protein belongs to the bacterial ribosomal protein bS6 family.

Its function is as follows. Binds together with bS18 to 16S ribosomal RNA. In Clostridium botulinum (strain Kyoto / Type A2), this protein is Small ribosomal subunit protein bS6.